The chain runs to 158 residues: Succinate dehydrogenase [ubiquinone] cytochrome b small subunit B, mitochondrial (158 aa).

The N-terminal 29 residues, 1–29 (MAALVRISSLCHRGVSPLLFRPSSLIRPL), are a transit peptide targeting the mitochondrion. Over 30-62 (AVQQKDHDCSYLISARIHATPSNYAGSGSKAAT) the chain is Mitochondrial matrix. A helical transmembrane segment spans residues 63–84 (MHWTGERILSIALLSLAPVAYF). Over 85 to 89 (CPSPA) the chain is Mitochondrial intermembrane. The chain crosses the membrane as a helical span at residues 90–110 (VDYSLAAALTLHGHWGLGQVV). H101 provides a ligand contact to heme b. Over 111-119 (TDYVHGDAK) the chain is Mitochondrial matrix. Y113 lines the a ubiquinone pocket. Residues 120–141 (IKMANAGLFVLSTVTFAGLCYF) form a helical membrane-spanning segment. The Mitochondrial intermembrane segment spans residues 142–158 (NYHDVGICKAVALLWSK).

The protein belongs to the CybS family. In terms of assembly, component of complex II composed of four subunits: the flavoprotein (FP) SDHA, iron-sulfur protein (IP) SDHB, and a cytochrome b560 composed of SDHC and SDHD.

It is found in the mitochondrion inner membrane. The protein operates within carbohydrate metabolism; tricarboxylic acid cycle. Its function is as follows. Membrane-anchoring subunit of succinate dehydrogenase (SDH) that is involved in complex II of the mitochondrial electron transport chain and is responsible for transferring electrons from succinate to ubiquinone (coenzyme Q). SDH also oxidizes malate to the non-canonical enol form of oxaloacetate, enol-oxaloacetate. Enol-oxaloacetate, which is a potent inhibitor of the succinate dehydrogenase activity, is further isomerized into keto-oxaloacetate. In Danio rerio (Zebrafish), this protein is Succinate dehydrogenase [ubiquinone] cytochrome b small subunit B, mitochondrial (sdhdb).